Consider the following 369-residue polypeptide: Histidinol-phosphate aminotransferase (369 aa).

The interval 1-39 (MSFGIDDLPVRDELRGKSPYGAPQLDVPVRLNTNENPYP) is disordered. At K230 the chain carries N6-(pyridoxal phosphate)lysine.

Belongs to the class-II pyridoxal-phosphate-dependent aminotransferase family. Histidinol-phosphate aminotransferase subfamily. In terms of assembly, homodimer. The cofactor is pyridoxal 5'-phosphate.

It carries out the reaction L-histidinol phosphate + 2-oxoglutarate = 3-(imidazol-4-yl)-2-oxopropyl phosphate + L-glutamate. Its pathway is amino-acid biosynthesis; L-histidine biosynthesis; L-histidine from 5-phospho-alpha-D-ribose 1-diphosphate: step 7/9. In Streptomyces avermitilis (strain ATCC 31267 / DSM 46492 / JCM 5070 / NBRC 14893 / NCIMB 12804 / NRRL 8165 / MA-4680), this protein is Histidinol-phosphate aminotransferase (hisC).